The chain runs to 550 residues: Hydroxylamine reductase (550 aa).

Residues Cys-3, Cys-6, Cys-18, and Cys-25 each coordinate [2Fe-2S] cluster. Positions 249, 273, 317, 405, 433, 458, 492, and 494 each coordinate hybrid [4Fe-2O-2S] cluster. The residue at position 405 (Cys-405) is a Cysteine persulfide.

This sequence belongs to the HCP family. Requires [2Fe-2S] cluster as cofactor. It depends on hybrid [4Fe-2O-2S] cluster as a cofactor.

Its subcellular location is the cytoplasm. The catalysed reaction is A + NH4(+) + H2O = hydroxylamine + AH2 + H(+). Functionally, catalyzes the reduction of hydroxylamine to form NH(3) and H(2)O. The sequence is that of Hydroxylamine reductase from Salmonella agona (strain SL483).